The sequence spans 382 residues: Protein arginine N-methyltransferase PRMT10 (382 aa).

A disordered region spans residues 1–21 (MASLPNGAASASAASSAAGGG). Low complexity predominate over residues 7–17 (GAASASAASSA). The SAM-dependent MTase PRMT-type domain maps to 28–359 (EVDFANYFCT…KENHRLMDME (332 aa)). Residues Glu-142 and Glu-151 contribute to the active site. The dimerization arm stretch occupies residues 189-229 (ENKMEDLEIAMHDWNLFVEDTESYYGVNMNVLTKAYRAEHE).

The protein belongs to the class I-like SAM-binding methyltransferase superfamily. Protein arginine N-methyltransferase family. As to quaternary structure, ring-like homodimer.

The catalysed reaction is L-arginyl-[protein] + 2 S-adenosyl-L-methionine = N(omega),N(omega)-dimethyl-L-arginyl-[protein] + 2 S-adenosyl-L-homocysteine + 2 H(+). Functionally, methylates (mono and asymmetric dimethylation) the guanidino nitrogens of arginyl residues in some proteins. In Oryza sativa subsp. indica (Rice), this protein is Protein arginine N-methyltransferase PRMT10 (PRMT10).